The sequence spans 234 residues: MGQKVNPVGLRLGINRNWTSRWFPSARTAPSNIDEDNKIRKFLKKELYYAGVSEIVIERAAKKLRVTVVAARPGLIIGKKGVDIEKVKEGLKTLIKKEVSINIKEVKRPQADAQLAAENVATQLEKRVAFRRAMKKVMQAALKSGAKGIKVRVSGRLAGAEIARTEWYMEGRVPLHTLRAKIDYGFAEAMTVYGIIGVKVWIFKGEVLQKGIQFEKKEEAKEEREPRRSRRGRQ.

Residues 39 to 107 (IRKFLKKELY…EVSINIKEVK (69 aa)) form the KH type-2 domain.

Belongs to the universal ribosomal protein uS3 family. As to quaternary structure, part of the 30S ribosomal subunit. Forms a tight complex with proteins S10 and S14.

In terms of biological role, binds the lower part of the 30S subunit head. Binds mRNA in the 70S ribosome, positioning it for translation. The chain is Small ribosomal subunit protein uS3 from Helicobacter pylori (strain G27).